The chain runs to 865 residues: cGMP-specific 3',5'-cyclic phosphodiesterase (865 aa).

Low complexity predominate over residues 69-83 (CSCSSQQSSRADSSA). A disordered region spans residues 69 to 92 (CSCSSQQSSRADSSAPGTPTRKIS). Ser92 bears the Phosphoserine mark. GAF domains lie at 154–304 (DVTA…GIVL) and 336–493 (SLEV…GLGI). Positions 526-850 (ETKELQSLAA…QKWQALAEQQ (325 aa)) constitute a PDEase domain. Residue His603 is the Proton donor of the active site. Zn(2+)-binding residues include His607, His643, Asp644, and Asp754. Asp644 is a binding site for Mg(2+). A 3',5'-cyclic GMP-binding site is contributed by Gln807.

It belongs to the cyclic nucleotide phosphodiesterase family. The cofactor is Zn(2+). Mg(2+) is required as a cofactor. In terms of processing, phosphorylation is regulated by binding of cGMP to the two allosteric sites. Phosphorylation by PRKG1 leads to its activation. In terms of tissue distribution, isoform PDE5A1 and isoform PDE5A2 are highly expressed in the cerebellum, hippocampus, retina, lung, heart, spleen, and thoracic artery. Isoform PDE5A1, but not isoform PDE5A2, is also abundantly expressed in the pylorus.

The protein resides in the cytoplasm. It is found in the cytosol. It catalyses the reaction 3',5'-cyclic GMP + H2O = GMP + H(+). It participates in purine metabolism; 3',5'-cyclic GMP degradation; GMP from 3',5'-cyclic GMP: step 1/1. Inhibited by zaprinast. In terms of biological role, plays a role in signal transduction by regulating the intracellular concentration of cyclic nucleotides. This phosphodiesterase catalyzes the specific hydrolysis of cGMP to 5'-GMP. Specifically regulates nitric-oxide-generated cGMP. The sequence is that of cGMP-specific 3',5'-cyclic phosphodiesterase (PDE5A) from Canis lupus familiaris (Dog).